We begin with the raw amino-acid sequence, 80 residues long: Exodeoxyribonuclease 7 small subunit (80 aa).

This sequence belongs to the XseB family. As to quaternary structure, heterooligomer composed of large and small subunits.

It is found in the cytoplasm. It catalyses the reaction Exonucleolytic cleavage in either 5'- to 3'- or 3'- to 5'-direction to yield nucleoside 5'-phosphates.. Its function is as follows. Bidirectionally degrades single-stranded DNA into large acid-insoluble oligonucleotides, which are then degraded further into small acid-soluble oligonucleotides. The sequence is that of Exodeoxyribonuclease 7 small subunit from Lactobacillus helveticus (strain DPC 4571).